Reading from the N-terminus, the 500-residue chain is Probable cytosol aminopeptidase (500 aa).

Mn(2+) contacts are provided by Lys-264 and Asp-269. Lys-276 is an active-site residue. Residues Asp-287, Asp-346, and Glu-348 each coordinate Mn(2+). Arg-350 is an active-site residue.

It belongs to the peptidase M17 family. Requires Mn(2+) as cofactor.

It is found in the cytoplasm. The catalysed reaction is Release of an N-terminal amino acid, Xaa-|-Yaa-, in which Xaa is preferably Leu, but may be other amino acids including Pro although not Arg or Lys, and Yaa may be Pro. Amino acid amides and methyl esters are also readily hydrolyzed, but rates on arylamides are exceedingly low.. It carries out the reaction Release of an N-terminal amino acid, preferentially leucine, but not glutamic or aspartic acids.. In terms of biological role, presumably involved in the processing and regular turnover of intracellular proteins. Catalyzes the removal of unsubstituted N-terminal amino acids from various peptides. The protein is Probable cytosol aminopeptidase of Rickettsia canadensis (strain McKiel).